The primary structure comprises 330 residues: Ketol-acid reductoisomerase (NADP(+)) (330 aa).

In terms of domain architecture, KARI N-terminal Rossmann spans 2–182 (ARMYYDADAN…GGTRAGILET (181 aa)). NADP(+) is bound by residues 25–28 (YGSQ), Ser51, Ser53, and 83–86 (DEFQ). His108 is an active-site residue. Residue Gly134 participates in NADP(+) binding. A KARI C-terminal knotted domain is found at 183-328 (SFREETETDL…KDLRAMFSWL (146 aa)). Residues Asp191, Glu195, Glu227, and Glu231 each coordinate Mg(2+). Ser252 is a substrate binding site.

This sequence belongs to the ketol-acid reductoisomerase family. Mg(2+) serves as cofactor.

It catalyses the reaction (2R)-2,3-dihydroxy-3-methylbutanoate + NADP(+) = (2S)-2-acetolactate + NADPH + H(+). The enzyme catalyses (2R,3R)-2,3-dihydroxy-3-methylpentanoate + NADP(+) = (S)-2-ethyl-2-hydroxy-3-oxobutanoate + NADPH + H(+). It functions in the pathway amino-acid biosynthesis; L-isoleucine biosynthesis; L-isoleucine from 2-oxobutanoate: step 2/4. It participates in amino-acid biosynthesis; L-valine biosynthesis; L-valine from pyruvate: step 2/4. Functionally, involved in the biosynthesis of branched-chain amino acids (BCAA). Catalyzes an alkyl-migration followed by a ketol-acid reduction of (S)-2-acetolactate (S2AL) to yield (R)-2,3-dihydroxy-isovalerate. In the isomerase reaction, S2AL is rearranged via a Mg-dependent methyl migration to produce 3-hydroxy-3-methyl-2-ketobutyrate (HMKB). In the reductase reaction, this 2-ketoacid undergoes a metal-dependent reduction by NADPH to yield (R)-2,3-dihydroxy-isovalerate. The chain is Ketol-acid reductoisomerase (NADP(+)) from Synechococcus elongatus (strain ATCC 33912 / PCC 7942 / FACHB-805) (Anacystis nidulans R2).